The following is a 97-amino-acid chain: Aspartyl/glutamyl-tRNA(Asn/Gln) amidotransferase subunit C (97 aa).

This sequence belongs to the GatC family. As to quaternary structure, heterotrimer of A, B and C subunits.

The enzyme catalyses L-glutamyl-tRNA(Gln) + L-glutamine + ATP + H2O = L-glutaminyl-tRNA(Gln) + L-glutamate + ADP + phosphate + H(+). The catalysed reaction is L-aspartyl-tRNA(Asn) + L-glutamine + ATP + H2O = L-asparaginyl-tRNA(Asn) + L-glutamate + ADP + phosphate + 2 H(+). In terms of biological role, allows the formation of correctly charged Asn-tRNA(Asn) or Gln-tRNA(Gln) through the transamidation of misacylated Asp-tRNA(Asn) or Glu-tRNA(Gln) in organisms which lack either or both of asparaginyl-tRNA or glutaminyl-tRNA synthetases. The reaction takes place in the presence of glutamine and ATP through an activated phospho-Asp-tRNA(Asn) or phospho-Glu-tRNA(Gln). In Anaeromyxobacter sp. (strain K), this protein is Aspartyl/glutamyl-tRNA(Asn/Gln) amidotransferase subunit C.